The primary structure comprises 696 residues: Elongation factor G (696 aa).

The tr-type G domain maps to 8-286 (EDVRNIGIAA…AVVHYLPSPV (279 aa)). GTP is bound by residues 17-24 (AHIDAGKT), 81-85 (DTPGH), and 135-138 (NKMD).

Belongs to the TRAFAC class translation factor GTPase superfamily. Classic translation factor GTPase family. EF-G/EF-2 subfamily.

It is found in the cytoplasm. In terms of biological role, catalyzes the GTP-dependent ribosomal translocation step during translation elongation. During this step, the ribosome changes from the pre-translocational (PRE) to the post-translocational (POST) state as the newly formed A-site-bound peptidyl-tRNA and P-site-bound deacylated tRNA move to the P and E sites, respectively. Catalyzes the coordinated movement of the two tRNA molecules, the mRNA and conformational changes in the ribosome. This Sulfurovum sp. (strain NBC37-1) protein is Elongation factor G.